The chain runs to 221 residues: Thiamine-phosphate synthase (221 aa).

Residues 47–51 (QYREK) and Asn79 contribute to the 4-amino-2-methyl-5-(diphosphooxymethyl)pyrimidine site. Mg(2+) contacts are provided by Asp80 and Asp99. Thr118 contacts 4-amino-2-methyl-5-(diphosphooxymethyl)pyrimidine. Residue 144-146 (SFT) participates in 2-[(2R,5Z)-2-carboxy-4-methylthiazol-5(2H)-ylidene]ethyl phosphate binding. Position 147 (Lys147) interacts with 4-amino-2-methyl-5-(diphosphooxymethyl)pyrimidine. 2-[(2R,5Z)-2-carboxy-4-methylthiazol-5(2H)-ylidene]ethyl phosphate is bound by residues Gly175 and 195-196 (VT).

The protein belongs to the thiamine-phosphate synthase family. Mg(2+) is required as a cofactor.

It carries out the reaction 2-[(2R,5Z)-2-carboxy-4-methylthiazol-5(2H)-ylidene]ethyl phosphate + 4-amino-2-methyl-5-(diphosphooxymethyl)pyrimidine + 2 H(+) = thiamine phosphate + CO2 + diphosphate. The enzyme catalyses 2-(2-carboxy-4-methylthiazol-5-yl)ethyl phosphate + 4-amino-2-methyl-5-(diphosphooxymethyl)pyrimidine + 2 H(+) = thiamine phosphate + CO2 + diphosphate. The catalysed reaction is 4-methyl-5-(2-phosphooxyethyl)-thiazole + 4-amino-2-methyl-5-(diphosphooxymethyl)pyrimidine + H(+) = thiamine phosphate + diphosphate. Its pathway is cofactor biosynthesis; thiamine diphosphate biosynthesis; thiamine phosphate from 4-amino-2-methyl-5-diphosphomethylpyrimidine and 4-methyl-5-(2-phosphoethyl)-thiazole: step 1/1. Functionally, condenses 4-methyl-5-(beta-hydroxyethyl)thiazole monophosphate (THZ-P) and 2-methyl-4-amino-5-hydroxymethyl pyrimidine pyrophosphate (HMP-PP) to form thiamine monophosphate (TMP). This is Thiamine-phosphate synthase from Caldicellulosiruptor saccharolyticus (strain ATCC 43494 / DSM 8903 / Tp8T 6331).